The primary structure comprises 274 residues: Hydroxyethylthiazole kinase (274 aa).

Residue Met-46 coordinates substrate. Residues Arg-122 and Thr-173 each contribute to the ATP site. Gly-200 provides a ligand contact to substrate.

This sequence belongs to the Thz kinase family. Mg(2+) serves as cofactor.

It carries out the reaction 5-(2-hydroxyethyl)-4-methylthiazole + ATP = 4-methyl-5-(2-phosphooxyethyl)-thiazole + ADP + H(+). It functions in the pathway cofactor biosynthesis; thiamine diphosphate biosynthesis; 4-methyl-5-(2-phosphoethyl)-thiazole from 5-(2-hydroxyethyl)-4-methylthiazole: step 1/1. Functionally, catalyzes the phosphorylation of the hydroxyl group of 4-methyl-5-beta-hydroxyethylthiazole (THZ). The protein is Hydroxyethylthiazole kinase of Clostridium tetani (strain Massachusetts / E88).